The primary structure comprises 449 residues: Sensor protein QseC (449 aa).

The Cytoplasmic portion of the chain corresponds to methionine 1 to arginine 12. The helical transmembrane segment at leucine 13–tryptophan 33 threads the bilayer. At arginine 34 to alanine 161 the chain is on the periplasmic side. The helical transmembrane segment at alanine 162 to leucine 182 threads the bilayer. Positions histidine 183–valine 235 constitute an HAMP domain. The Cytoplasmic segment spans residues histidine 183 to tryptophan 449. Residues aspartate 243–tryptophan 449 enclose the Histidine kinase domain. The residue at position 246 (histidine 246) is a Phosphohistidine; by autocatalysis.

It localises to the cell inner membrane. The catalysed reaction is ATP + protein L-histidine = ADP + protein N-phospho-L-histidine.. Member of a two-component regulatory system QseB/QseC. Activates the flagella regulon by activating transcription of FlhDC. May activate QseB by phosphorylation. This chain is Sensor protein QseC (qseC), found in Salmonella typhimurium (strain LT2 / SGSC1412 / ATCC 700720).